Here is a 216-residue protein sequence, read N- to C-terminus: Protein-L-isoaspartate O-methyltransferase (216 aa).

The active site involves Ser-62.

This sequence belongs to the methyltransferase superfamily. L-isoaspartyl/D-aspartyl protein methyltransferase family.

It localises to the cytoplasm. The enzyme catalyses [protein]-L-isoaspartate + S-adenosyl-L-methionine = [protein]-L-isoaspartate alpha-methyl ester + S-adenosyl-L-homocysteine. Its function is as follows. Catalyzes the methyl esterification of L-isoaspartyl residues in peptides and proteins that result from spontaneous decomposition of normal L-aspartyl and L-asparaginyl residues. It plays a role in the repair and/or degradation of damaged proteins. The chain is Protein-L-isoaspartate O-methyltransferase from Methanospirillum hungatei JF-1 (strain ATCC 27890 / DSM 864 / NBRC 100397 / JF-1).